Reading from the N-terminus, the 629-residue chain is DNA mismatch repair protein MutL (629 aa).

The disordered stretch occupies residues 376-396 (QYHEKPQQNQPHFSNTPVLPN). A compositionally biased stretch (polar residues) spans 382 to 396 (QQNQPHFSNTPVLPN).

This sequence belongs to the DNA mismatch repair MutL/HexB family.

Its function is as follows. This protein is involved in the repair of mismatches in DNA. It is required for dam-dependent methyl-directed DNA mismatch repair. May act as a 'molecular matchmaker', a protein that promotes the formation of a stable complex between two or more DNA-binding proteins in an ATP-dependent manner without itself being part of a final effector complex. This Haemophilus influenzae (strain PittEE) protein is DNA mismatch repair protein MutL.